We begin with the raw amino-acid sequence, 340 residues long: tRNA N6-adenosine threonylcarbamoyltransferase (340 aa).

Residues His-115 and His-119 each contribute to the Fe cation site. Substrate is bound by residues 138–142, Asp-171, Gly-184, Asp-188, and Asn-278; that span reads VVSGG. Asp-306 contributes to the Fe cation binding site.

It belongs to the KAE1 / TsaD family. The cofactor is Fe(2+).

Its subcellular location is the cytoplasm. The enzyme catalyses L-threonylcarbamoyladenylate + adenosine(37) in tRNA = N(6)-L-threonylcarbamoyladenosine(37) in tRNA + AMP + H(+). In terms of biological role, required for the formation of a threonylcarbamoyl group on adenosine at position 37 (t(6)A37) in tRNAs that read codons beginning with adenine. Is involved in the transfer of the threonylcarbamoyl moiety of threonylcarbamoyl-AMP (TC-AMP) to the N6 group of A37, together with TsaE and TsaB. TsaD likely plays a direct catalytic role in this reaction. The chain is tRNA N6-adenosine threonylcarbamoyltransferase from Clostridium botulinum (strain Hall / ATCC 3502 / NCTC 13319 / Type A).